We begin with the raw amino-acid sequence, 145 residues long: Deoxyuridine 5'-triphosphate nucleotidohydrolase (145 aa).

Residues 63 to 65 (RSG), Asn76, and 80 to 82 (TID) contribute to the substrate site.

Belongs to the dUTPase family. Mg(2+) is required as a cofactor.

It carries out the reaction dUTP + H2O = dUMP + diphosphate + H(+). It functions in the pathway pyrimidine metabolism; dUMP biosynthesis; dUMP from dCTP (dUTP route): step 2/2. In terms of biological role, this enzyme is involved in nucleotide metabolism: it produces dUMP, the immediate precursor of thymidine nucleotides and it decreases the intracellular concentration of dUTP so that uracil cannot be incorporated into DNA. The sequence is that of Deoxyuridine 5'-triphosphate nucleotidohydrolase from Chlamydia pneumoniae (Chlamydophila pneumoniae).